A 217-amino-acid chain; its full sequence is Ribonuclease HII (217 aa).

In terms of domain architecture, RNase H type-2 spans 25–215; it reads KLIAGVDESG…VKHVISDINR (191 aa). Residues Asp31, Glu32, and Asp123 each coordinate a divalent metal cation.

This sequence belongs to the RNase HII family. Mn(2+) is required as a cofactor. It depends on Mg(2+) as a cofactor.

It localises to the cytoplasm. The catalysed reaction is Endonucleolytic cleavage to 5'-phosphomonoester.. Its function is as follows. Endonuclease that specifically degrades the RNA of RNA-DNA hybrids. The polypeptide is Ribonuclease HII (Blochmanniella pennsylvanica (strain BPEN)).